A 65-amino-acid chain; its full sequence is Pancreatic polypeptide prohormone (65 aa).

Y36 is subject to Tyrosine amide. Positions E59–A65 are excised as a propeptide.

It belongs to the NPY family.

It localises to the secreted. Functionally, hormone secreted by pancreatic cells that acts as a regulator of pancreatic and gastrointestinal functions probably by signaling through the G protein-coupled receptor NPY4R2. In Sus scrofa (Pig), this protein is Pancreatic polypeptide prohormone (PPY).